Reading from the N-terminus, the 456-residue chain is GTPase Der (456 aa).

EngA-type G domains lie at 4 to 169 (PIVA…PAVE) and 177 to 352 (IKVA…ESHK). Residues 10–17 (GRPNVGKS), 57–61 (DTGGL), 120–123 (NKCE), 183–190 (GRPNVGKS), 230–234 (DTAGI), and 295–298 (NKWD) contribute to the GTP site. The region spanning 353-438 (RRVSTSVINE…PIILLWRSKK (86 aa)) is the KH-like domain.

It belongs to the TRAFAC class TrmE-Era-EngA-EngB-Septin-like GTPase superfamily. EngA (Der) GTPase family. As to quaternary structure, associates with the 50S ribosomal subunit.

Its function is as follows. GTPase that plays an essential role in the late steps of ribosome biogenesis. This Nostoc punctiforme (strain ATCC 29133 / PCC 73102) protein is GTPase Der.